Reading from the N-terminus, the 565-residue chain is Nephrocystin-1 (565 aa).

Acidic residues predominate over residues G1–Q32. Disordered regions lie at residues G1 to I46 and V95 to T132. A coiled-coil region spans residues E2–V48. S14 is modified (phosphoserine). Positions A40–K100 constitute an SH3 domain. A compositionally biased stretch (acidic residues) spans Q104–V118. At Y182 the chain carries Phosphotyrosine; by FAK2. Residue Y554 is modified to Phosphotyrosine; by SRC.

It belongs to the nephrocystin-1 family. As to quaternary structure, interacts with Crk-associated substrate BCAR1, NPHP4, PTK2B/PYK2 and tensin. Interacts with INVS and NPHP3. Interacts with AHI1 and TNK2. Interacts with NPHP4 in a complex containing NPHP1, NPHP4 and RPGRIP1L/NPHP8. Interacts with IQCB1; the interaction likely requires additional interactors. Interacts with KIF7. Interacts with ANKS3. Interacts with SPATA7. Interacts with FLNA. Expressed in renal cells (at protein level).

Its subcellular location is the cell junction. The protein resides in the adherens junction. It is found in the cell projection. It localises to the cilium. The protein localises to the cytoplasm. Its subcellular location is the cytoskeleton. The protein resides in the cilium axoneme. It is found in the tight junction. Together with BCAR1 it may play a role in the control of epithelial cell polarity. Involved in the organization of apical junctions in kidney cells together with NPHP4 and RPGRIP1L/NPHP8. Does not seem to be strictly required for ciliogenesis. Seems to help to recruit PTK2B/PYK2 to cell matrix adhesions, thereby initiating phosphorylation of PTK2B/PYK2 and PTK2B/PYK2-dependent signaling. May play a role in the regulation of intraflagellar transport (IFT) during cilia assembly. Required for normal retina development. In connecting photoreceptor cilia influences the movement of some IFT proteins such as IFT88 and WDR19. Involved in spermatogenesis. This is Nephrocystin-1 (NPHP1) from Canis lupus familiaris (Dog).